An 887-amino-acid chain; its full sequence is Pyruvate dehydrogenase E1 component (887 aa).

Homodimer. Part of the PDH complex, consisting of multiple copies of pyruvate dehydrogenase (E1), dihydrolipoamide acetyltransferase (E2) and lipoamide dehydrogenase (E3). It depends on thiamine diphosphate as a cofactor.

The catalysed reaction is N(6)-[(R)-lipoyl]-L-lysyl-[protein] + pyruvate + H(+) = N(6)-[(R)-S(8)-acetyldihydrolipoyl]-L-lysyl-[protein] + CO2. Component of the pyruvate dehydrogenase (PDH) complex, that catalyzes the overall conversion of pyruvate to acetyl-CoA and CO(2). This chain is Pyruvate dehydrogenase E1 component (aceE), found in Buchnera aphidicola subsp. Baizongia pistaciae (strain Bp).